Consider the following 444-residue polypeptide: Glycerol-3-phosphate transporter (444 aa).

The Cytoplasmic portion of the chain corresponds to 1–36 (MLNIFKPAPHIERLDDSKMDAAYKRLRLQVFIGIFI). A helical transmembrane segment spans residues 37 to 57 (GYAGYYLLRKNFAFAIPYLQE). The Extracellular portion of the chain corresponds to 58–63 (QGFSKT). Residues 64–84 (ELGLVLAAVSIAYGFSKFIMG) form a helical membrane-spanning segment. Residues 85 to 93 (MVSDRCNPR) lie on the Cytoplasmic side of the membrane. A helical transmembrane segment spans residues 94 to 112 (YFLATGLFLSAIVNILFVS). The Extracellular portion of the chain corresponds to 113 to 120 (MPWVTSSV). A helical transmembrane segment spans residues 121-141 (TIMFIFMFINGWFQGMGWPPC). Residues 142–160 (GRTMAHWFSISERGTKMSI) are Cytoplasmic-facing. The chain crosses the membrane as a helical span at residues 161-180 (WNVAHNIGGGILAPLVTLGI). Over 181-189 (AMFVTWKSV) the chain is Extracellular. A helical membrane pass occupies residues 190–207 (FFFPAIIAIIISFLIVLL). Residues 208 to 261 (VRDTPQSCGLPPIEEYRNDYPKHAFKNQEKELTTKEILFQYVLNNKFLWYIAFA) lie on the Cytoplasmic side of the membrane. The chain crosses the membrane as a helical span at residues 262–282 (NVFVYFVRYGVVDWAPTYLTE). The Extracellular segment spans residues 283 to 287 (AKGFS). The chain crosses the membrane as a helical span at residues 288-308 (PEDSRWSYFLYEYAGIPGTIL). Residues 309–321 (CGWISDRFFKSRR) lie on the Cytoplasmic side of the membrane. The helical transmembrane segment at 322–341 (APAGVLFMAGVFIAVLVYWL) threads the bilayer. Residues 342-346 (NPAGN) lie on the Extracellular side of the membrane. Residues 347-368 (PLVDNIALISIGFLIYGPVMLI) form a helical membrane-spanning segment. The Cytoplasmic portion of the chain corresponds to 369–387 (GLQAIDLAPKKAAGTAAGL). Residues 388–409 (TGFFGYIGGSAFANAIMGFVVD) form a helical membrane-spanning segment. Topologically, residues 410–414 (RFNWN) are extracellular. Residues 415 to 435 (GGFIMLISSCILAIVFLALTW) form a helical membrane-spanning segment. The Cytoplasmic segment spans residues 436–444 (NTGKRAEHV).

The protein belongs to the major facilitator superfamily. Organophosphate:Pi antiporter (OPA) (TC 2.A.1.4) family.

The protein localises to the cell membrane. Functionally, responsible for glycerol-3-phosphate uptake. This chain is Glycerol-3-phosphate transporter (glpT), found in Bacillus subtilis (strain 168).